A 281-amino-acid polypeptide reads, in one-letter code: Oxidoreductase-like protein SRL4 (281 aa).

Residues Leu39, Thr60, Lys67, Lys152, and Lys197 each contribute to the NADP(+) site. Lys197 functions as the Lowers pKa of active site Tyr in the catalytic mechanism.

Belongs to the short-chain dehydrogenases/reductases (SDR) family.

May be involved in the regulation of dNTP production. Induces the SOS system when expressed in E.coli, therefore, it may play a role in DNA metabolism and/or in genome stability. The protein is Oxidoreductase-like protein SRL4 (SRL4) of Saccharomyces cerevisiae (strain ATCC 204508 / S288c) (Baker's yeast).